Reading from the N-terminus, the 164-residue chain is Protein LIGHT-DEPENDENT SHORT HYPOCOTYLS 8 (164 aa).

In terms of domain architecture, ALOG spans 23-150 (RYESQKSRDW…ARGVLYKKKK (128 aa)). The Nuclear localization signal signature appears at 148–152 (KKKRL).

The protein belongs to the plant homeotic and developmental regulators ALOG protein family.

It is found in the nucleus. In terms of biological role, probable transcription regulator that acts as a developmental regulator by promoting cell growth in response to light. The chain is Protein LIGHT-DEPENDENT SHORT HYPOCOTYLS 8 (LSH8) from Arabidopsis thaliana (Mouse-ear cress).